Here is an 809-residue protein sequence, read N- to C-terminus: Zygotic DNA replication licensing factor mcm3 (809 aa).

Positions 297 to 504 (IFEQLSRSLA…QDREISDHVL (208 aa)) constitute an MCM domain. Residue 347 to 354 (GDPSVAKS) participates in ATP binding. The Arginine finger signature appears at 479 to 482 (SRFD). Residues 664–741 (KKRRRRDEDS…TDSSAKPGLS (78 aa)) are disordered. A compositionally biased stretch (basic and acidic residues) spans 696–705 (AQEGESHDPY).

The protein belongs to the MCM family. In terms of assembly, component of the mcm2-7 complex (RLF-M). The complex forms a toroidal hexameric ring with the proposed subunit order mcm2-mcm6-mcm4-mcm7-mcm3-mcm5. Component of the CMG helicase complex, composed of the mcm2-7 complex, the GINS complex and cdc45.

The protein resides in the nucleus. Its subcellular location is the chromosome. It carries out the reaction ATP + H2O = ADP + phosphate + H(+). Functionally, acts as a component of the MCM2-7 complex (MCM complex) which is the putative replicative helicase essential for 'once per cell cycle' DNA replication initiation and elongation in eukaryotic cells. The active ATPase sites in the MCM2-7 ring are formed through the interaction surfaces of two neighboring subunits such that a critical structure of a conserved arginine finger motif is provided in trans relative to the ATP-binding site of the Walker A box of the adjacent subunit. The six ATPase active sites, however, are likely to contribute differentially to the complex helicase activity. The existence of maternal and zygotic forms of mcm3 and mcm6 suggests that specific forms of mcm2-7 complexes may be used during different stages of development. This Xenopus tropicalis (Western clawed frog) protein is Zygotic DNA replication licensing factor mcm3 (zmcm3).